Consider the following 150-residue polypeptide: MRIVVQRVKHASVTNDSVDNKINKGYCLLVGVGKSSTEADIATLAKKIVNARLFEDADGKLNLNLQQVEGEILSISQFTLYADVRKGNRPGFTQSMSPDCANELYEQFNDTLRSYGINVLTGEFGTDMLVDIANDGPVTIIYESQDGKII.

A Gly-cisPro motif, important for rejection of L-amino acids motif is present at residues 136-137 (GP).

Belongs to the DTD family. As to quaternary structure, homodimer.

Its subcellular location is the cytoplasm. The enzyme catalyses glycyl-tRNA(Ala) + H2O = tRNA(Ala) + glycine + H(+). It carries out the reaction a D-aminoacyl-tRNA + H2O = a tRNA + a D-alpha-amino acid + H(+). Functionally, an aminoacyl-tRNA editing enzyme that deacylates mischarged D-aminoacyl-tRNAs. Also deacylates mischarged glycyl-tRNA(Ala), protecting cells against glycine mischarging by AlaRS. Acts via tRNA-based rather than protein-based catalysis; rejects L-amino acids rather than detecting D-amino acids in the active site. By recycling D-aminoacyl-tRNA to D-amino acids and free tRNA molecules, this enzyme counteracts the toxicity associated with the formation of D-aminoacyl-tRNA entities in vivo and helps enforce protein L-homochirality. In Staphylococcus saprophyticus subsp. saprophyticus (strain ATCC 15305 / DSM 20229 / NCIMB 8711 / NCTC 7292 / S-41), this protein is D-aminoacyl-tRNA deacylase.